Consider the following 581-residue polypeptide: Colicin-E2 (581 aa).

Disordered stretches follow at residues 1 to 74 (MSGG…SGGG), 242 to 269 (QTLS…NTRD), 293 to 320 (PDQV…EAAE), 421 to 488 (ADAA…IADK), and 513 to 566 (DLSK…MNNI). Residues 20-35 (INGGPTGLGVGGGASD) are compositionally biased toward gly residues. Over residues 36–45 (GSGWSSENNP) the composition is skewed to low complexity. The segment covering 46 to 74 (WGGGSGSGIHWGGGSGHGNGGGNGNSGGG) has biased composition (gly residues). Over residues 242–251 (QTLSPGVTNN) the composition is skewed to polar residues. Basic and acidic residues-rich tracts occupy residues 296-320 (VKQR…EAAE), 429-452 (QERR…ESKR), and 464-475 (PVGDKWLDDAGK). Positions 518–527 (FKGSNKTNIQ) are enriched in polar residues. The span at 535-554 (RKKDQVGGRERFELHHDKPI) shows a compositional bias: basic and acidic residues. H549, H574, and H578 together coordinate Zn(2+).

The protein belongs to the colicin/pyosin nuclease family.

Its function is as follows. This plasmid-coded bactericidal protein is an endonuclease active on both single- and double-stranded DNA but with undefined specificity. Colicins are polypeptide toxins produced by and active against E.coli and closely related bacteria. In Escherichia coli, this protein is Colicin-E2 (col).